A 129-amino-acid chain; its full sequence is Gas vesicle protein C (129 aa).

3 consecutive repeats follow at residues Val19–Phe51, His52–Phe84, and His85–Phe117. The tract at residues Val19–Phe117 is 3 X 33 AA tandem repeats.

The protein belongs to the gas vesicle GvpC family.

The protein resides in the gas vesicle. Its function is as follows. Confers stability, involved in shaping gas vesicles, hollow, gas filled proteinaceous nanostructures. During planktonic growth they allow positioning of the organism at a favorable depth for light or nutrient acquisition. Cluster expression in E.coli (gvpA1-gvpA2-gvpC-gvpN-gvpJ-gvpK-gvpF-gvpG-gvpV-gvpW) allows cells to float and produces irregularly shaped gas vesicles. The sequence is that of Gas vesicle protein C from Nostoc sp. (strain PCC 7120 / SAG 25.82 / UTEX 2576).